We begin with the raw amino-acid sequence, 505 residues long: N-succinylglutamate 5-semialdehyde dehydrogenase (505 aa).

234 to 239 (GSAHTG) serves as a coordination point for NAD(+). Catalysis depends on residues E257 and C291.

It belongs to the aldehyde dehydrogenase family. AstD subfamily.

It carries out the reaction N-succinyl-L-glutamate 5-semialdehyde + NAD(+) + H2O = N-succinyl-L-glutamate + NADH + 2 H(+). It functions in the pathway amino-acid degradation; L-arginine degradation via AST pathway; L-glutamate and succinate from L-arginine: step 4/5. Catalyzes the NAD-dependent reduction of succinylglutamate semialdehyde into succinylglutamate. In Yersinia pestis bv. Antiqua (strain Antiqua), this protein is N-succinylglutamate 5-semialdehyde dehydrogenase.